The following is a 309-amino-acid chain: Uricase-2 isozyme 1 (309 aa).

Residues Lys18 and Thr64 each act as charge relay system in the active site. Urate-binding residues include Thr64, Asp65, Phe166, Arg183, Val238, Gln239, and Asn265. The active-site Charge relay system is the His267. The Microbody targeting signal motif lies at 307–309; it reads SKL.

The protein belongs to the uricase family. In terms of assembly, homotetramer. Post-translationally, the N-terminus is blocked. Expressed predominantly in the uninfected cells of the central tissue of the root nodule.

The protein localises to the peroxisome. The enzyme catalyses urate + O2 + H2O = 5-hydroxyisourate + H2O2. It functions in the pathway purine metabolism; urate degradation; (S)-allantoin from urate: step 1/3. In terms of biological role, catalyzes the oxidation of uric acid to 5-hydroxyisourate, which is further processed to form (S)-allantoin. The protein is Uricase-2 isozyme 1 of Glycine max (Soybean).